The sequence spans 201 residues: Small ribosomal subunit protein uS4 (201 aa).

Residues 91 to 157 (CRLDNVVYRA…TPFIIAKETI (67 aa)) enclose the S4 RNA-binding domain.

Belongs to the universal ribosomal protein uS4 family. In terms of assembly, part of the 30S ribosomal subunit. Contacts protein S5. The interaction surface between S4 and S5 is involved in control of translational fidelity.

Functionally, one of the primary rRNA binding proteins, it binds directly to 16S rRNA where it nucleates assembly of the body of the 30S subunit. With S5 and S12 plays an important role in translational accuracy. In Saccharopolyspora erythraea (strain ATCC 11635 / DSM 40517 / JCM 4748 / NBRC 13426 / NCIMB 8594 / NRRL 2338), this protein is Small ribosomal subunit protein uS4.